The chain runs to 377 residues: Succinyl-diaminopimelate desuccinylase (377 aa).

Residue H67 coordinates Zn(2+). The active site involves D69. Residue D100 participates in Zn(2+) binding. The active-site Proton acceptor is E134. Residues E135, E163, and H349 each coordinate Zn(2+).

The protein belongs to the peptidase M20A family. DapE subfamily. Homodimer. It depends on Zn(2+) as a cofactor. Co(2+) is required as a cofactor.

It catalyses the reaction N-succinyl-(2S,6S)-2,6-diaminopimelate + H2O = (2S,6S)-2,6-diaminopimelate + succinate. The protein operates within amino-acid biosynthesis; L-lysine biosynthesis via DAP pathway; LL-2,6-diaminopimelate from (S)-tetrahydrodipicolinate (succinylase route): step 3/3. Functionally, catalyzes the hydrolysis of N-succinyl-L,L-diaminopimelic acid (SDAP), forming succinate and LL-2,6-diaminopimelate (DAP), an intermediate involved in the bacterial biosynthesis of lysine and meso-diaminopimelic acid, an essential component of bacterial cell walls. The sequence is that of Succinyl-diaminopimelate desuccinylase from Dechloromonas aromatica (strain RCB).